A 301-amino-acid chain; its full sequence is Phosphonates import ATP-binding protein PhnC (301 aa).

An ABC transporter domain is found at 8 to 256; sequence IRIERLSKTF…LLKTLYGDEA (249 aa). 41–48 contributes to the ATP binding site; that stretch reads GASGSGKS. The segment at 264–287 is disordered; that stretch reads AQGPDDTESKNTADNTPLQDAAPA.

The protein belongs to the ABC transporter superfamily. Phosphonates importer (TC 3.A.1.9.1) family. The complex is composed of two ATP-binding proteins (PhnC), two transmembrane proteins (PhnE) and a solute-binding protein (PhnD).

Its subcellular location is the cell inner membrane. The catalysed reaction is phosphonate(out) + ATP + H2O = phosphonate(in) + ADP + phosphate + H(+). In terms of biological role, part of the ABC transporter complex PhnCDE involved in phosphonates import. Responsible for energy coupling to the transport system. This Paraburkholderia xenovorans (strain LB400) protein is Phosphonates import ATP-binding protein PhnC.